The following is a 228-amino-acid chain: Pyridoxal phosphate homeostasis protein (228 aa).

Lysine 35 bears the N6-(pyridoxal phosphate)lysine mark.

This sequence belongs to the pyridoxal phosphate-binding protein YggS/PROSC family.

In terms of biological role, pyridoxal 5'-phosphate (PLP)-binding protein, which is involved in PLP homeostasis. The polypeptide is Pyridoxal phosphate homeostasis protein (Aquifex aeolicus (strain VF5)).